Consider the following 185-residue polypeptide: FK506-binding protein 2 (185 aa).

Positions 1-20 (MQGLLLSLSLLASAAVGVLA) are cleaved as a signal peptide. In terms of domain architecture, PPIase FKBP-type spans 41–129 (GDKINVHYKG…VFETELVGIE (89 aa)). Positions 182–185 (HNEL) match the Prevents secretion from ER motif.

Belongs to the FKBP-type PPIase family. FKBP2 subfamily.

It localises to the endoplasmic reticulum. It carries out the reaction [protein]-peptidylproline (omega=180) = [protein]-peptidylproline (omega=0). With respect to regulation, inhibited by both FK506 and rapamycin. Its function is as follows. PPIases accelerate the folding of proteins. It catalyzes the cis-trans isomerization of proline imidic peptide bonds in oligopeptides. The protein is FK506-binding protein 2 (FPR2) of Podospora anserina (Pleurage anserina).